The primary structure comprises 442 residues: tRNA-2-methylthio-N(6)-dimethylallyladenosine synthase (442 aa).

An MTTase N-terminal domain is found at 5–122 (KKVFIKTLGC…LPEMIKQKQK (118 aa)). Residues Cys-14, Cys-51, Cys-85, Cys-159, Cys-163, and Cys-166 each contribute to the [4Fe-4S] cluster site. A Radical SAM core domain is found at 145–378 (KAEGAKAYVS…DLLNSNAQII (234 aa)). One can recognise a TRAM domain in the interval 380-442 (RQMVGTNQRI…LPNSLRGELI (63 aa)).

It belongs to the methylthiotransferase family. MiaB subfamily. As to quaternary structure, monomer. [4Fe-4S] cluster is required as a cofactor.

It localises to the cytoplasm. It carries out the reaction N(6)-dimethylallyladenosine(37) in tRNA + (sulfur carrier)-SH + AH2 + 2 S-adenosyl-L-methionine = 2-methylsulfanyl-N(6)-dimethylallyladenosine(37) in tRNA + (sulfur carrier)-H + 5'-deoxyadenosine + L-methionine + A + S-adenosyl-L-homocysteine + 2 H(+). In terms of biological role, catalyzes the methylthiolation of N6-(dimethylallyl)adenosine (i(6)A), leading to the formation of 2-methylthio-N6-(dimethylallyl)adenosine (ms(2)i(6)A) at position 37 in tRNAs that read codons beginning with uridine. The chain is tRNA-2-methylthio-N(6)-dimethylallyladenosine synthase from Francisella tularensis subsp. tularensis (strain FSC 198).